We begin with the raw amino-acid sequence, 613 residues long: Transcription factor MTB1 (613 aa).

A JAZ-interaction domain region spans residues 48–130; sequence LQNKLSDLVE…RVLQKLHMLF (83 aa). 2 disordered regions span residues 256 to 285 and 391 to 441; these read EKNE…FGHD and AHNV…AERQ. A compositionally biased stretch (polar residues) spans 260–270; that stretch reads GNNPRLSNSGA. 2 stretches are compositionally biased toward basic and acidic residues: residues 394 to 417 and 427 to 441; these read VESE…DEKR and NGRE…AERQ. A basic motif; degenerate region spans residues 430–443; it reads EEPLNHVEAERQRR. The 50-residue stretch at 430–479 folds into the bHLH domain; that stretch reads EEPLNHVEAERQRREKLNQRFYALRAVVPNISKMDKASLLGDAIAYITEL. Residues 444 to 479 are helix-loop-helix motif; it reads EKLNQRFYALRAVVPNISKMDKASLLGDAIAYITEL. The tract at residues 490 to 513 is disordered; the sequence is RELRLGSTSRDAITSEDSPSSEIQ. Residues 495 to 512 show a composition bias toward polar residues; sequence GSTSRDAITSEDSPSSEI.

As to quaternary structure, interacts with MYC2 (via N-terminus). MTB1 competes with MED25 for binding to MYC2. Interacts (via N-terminus) with JAZ7.

Its subcellular location is the nucleus. Functionally, transcription factor that negatively regulates jasmonate (JA) signaling. Negatively regulates JA-dependent response to wounding, JA-induced expression of defense genes, JA-dependent responses against herbivorous insects, and JA-dependent resistance against Botrytis cinerea infection. Plays a positive role in resistance against the bacterial pathogen Pseudomonas syringae pv tomato DC3000. The sequence is that of Transcription factor MTB1 from Solanum lycopersicum (Tomato).